A 316-amino-acid chain; its full sequence is Acetyl-coenzyme A carboxylase carboxyl transferase subunit alpha (316 aa).

A CoA carboxyltransferase C-terminal domain is found at 36 to 290 (KLEQKLDSLK…KQFLVEQLHI (255 aa)).

Belongs to the AccA family. In terms of assembly, acetyl-CoA carboxylase is a heterohexamer composed of biotin carboxyl carrier protein (AccB), biotin carboxylase (AccC) and two subunits each of ACCase subunit alpha (AccA) and ACCase subunit beta (AccD).

The protein localises to the cytoplasm. The enzyme catalyses N(6)-carboxybiotinyl-L-lysyl-[protein] + acetyl-CoA = N(6)-biotinyl-L-lysyl-[protein] + malonyl-CoA. The protein operates within lipid metabolism; malonyl-CoA biosynthesis; malonyl-CoA from acetyl-CoA: step 1/1. Its function is as follows. Component of the acetyl coenzyme A carboxylase (ACC) complex. First, biotin carboxylase catalyzes the carboxylation of biotin on its carrier protein (BCCP) and then the CO(2) group is transferred by the carboxyltransferase to acetyl-CoA to form malonyl-CoA. The polypeptide is Acetyl-coenzyme A carboxylase carboxyl transferase subunit alpha (Protochlamydia amoebophila (strain UWE25)).